A 100-amino-acid chain; its full sequence is AKSKDDSKPAPPKRPLSAFFLFKQHNYEQVKKENPNAKITELTSMIAEKWKAVGEKEKKKYETLQSEAKAKYEKDMQAYEKKYGKPEKQKKIKKNKKGSK.

Residues 12–80 (PKRPLSAFFL…KYEKDMQAYE (69 aa)) constitute a DNA-binding region (HMG box). A disordered region spans residues 81 to 100 (KKYGKPEKQKKIKKNKKGSK). The segment covering 90 to 100 (KKIKKNKKGSK) has biased composition (basic residues).

It localises to the nucleus. The protein localises to the chromosome. This chain is High mobility group protein C, found in Tetrahymena thermophila.